Consider the following 163-residue polypeptide: Arginine repressor (163 aa).

The protein belongs to the ArgR family.

The protein resides in the cytoplasm. Its pathway is amino-acid biosynthesis; L-arginine biosynthesis [regulation]. In terms of biological role, regulates arginine biosynthesis genes. This is Arginine repressor from Corynebacterium diphtheriae (strain ATCC 700971 / NCTC 13129 / Biotype gravis).